The chain runs to 1486 residues: Chromosome partition protein MukB (1486 aa).

G34–S41 is a binding site for ATP. Coiled-coil stretches lie at residues L326–Q418, L444–Q480, and R509–V603. Positions P666–R783 are flexible hinge. Coiled-coil stretches lie at residues E835–E923, E977–A1115, and V1209–S1266.

This sequence belongs to the SMC family. MukB subfamily. As to quaternary structure, homodimerization via its hinge domain. Binds to DNA via its C-terminal region. Interacts, and probably forms a ternary complex, with MukE and MukF via its C-terminal region. The complex formation is stimulated by calcium or magnesium. Interacts with tubulin-related protein FtsZ.

Its subcellular location is the cytoplasm. It is found in the nucleoid. Plays a central role in chromosome condensation, segregation and cell cycle progression. Functions as a homodimer, which is essential for chromosome partition. Involved in negative DNA supercoiling in vivo, and by this means organize and compact chromosomes. May achieve or facilitate chromosome segregation by condensation DNA from both sides of a centrally located replisome during cell division. This is Chromosome partition protein MukB from Escherichia coli (strain 55989 / EAEC).